Here is a 129-residue protein sequence, read N- to C-terminus: Small ribosomal subunit protein uS12 (129 aa).

Residue Asp-89 is modified to 3-methylthioaspartic acid. The interval 110-129 is disordered; it reads RKQGRSRYGAPRKQVVATKK.

This sequence belongs to the universal ribosomal protein uS12 family. As to quaternary structure, part of the 30S ribosomal subunit. Contacts proteins S8 and S17. May interact with IF1 in the 30S initiation complex.

Its function is as follows. With S4 and S5 plays an important role in translational accuracy. In terms of biological role, interacts with and stabilizes bases of the 16S rRNA that are involved in tRNA selection in the A site and with the mRNA backbone. Located at the interface of the 30S and 50S subunits, it traverses the body of the 30S subunit contacting proteins on the other side and probably holding the rRNA structure together. The combined cluster of proteins S8, S12 and S17 appears to hold together the shoulder and platform of the 30S subunit. In Rickettsia bellii (strain RML369-C), this protein is Small ribosomal subunit protein uS12.